Reading from the N-terminus, the 338-residue chain is tRNA N6-adenosine threonylcarbamoyltransferase (338 aa).

Positions 110 and 114 each coordinate Fe cation. Substrate is bound by residues 132 to 136, Asp-165, Gly-178, and Asn-274; that span reads VLSGG. Asp-298 is a binding site for Fe cation.

This sequence belongs to the KAE1 / TsaD family. Fe(2+) serves as cofactor.

Its subcellular location is the cytoplasm. The enzyme catalyses L-threonylcarbamoyladenylate + adenosine(37) in tRNA = N(6)-L-threonylcarbamoyladenosine(37) in tRNA + AMP + H(+). Functionally, required for the formation of a threonylcarbamoyl group on adenosine at position 37 (t(6)A37) in tRNAs that read codons beginning with adenine. Is involved in the transfer of the threonylcarbamoyl moiety of threonylcarbamoyl-AMP (TC-AMP) to the N6 group of A37, together with TsaE and TsaB. TsaD likely plays a direct catalytic role in this reaction. The polypeptide is tRNA N6-adenosine threonylcarbamoyltransferase (Borrelia recurrentis (strain A1)).